The primary structure comprises 877 residues: Leucine--tRNA ligase (877 aa).

The 'HIGH' region signature appears at 43–53 (PYPSGRIHMGH). The 'KMSKS' region signature appears at 628-632 (KMSKS). Lys631 serves as a coordination point for ATP.

The protein belongs to the class-I aminoacyl-tRNA synthetase family.

It is found in the cytoplasm. The enzyme catalyses tRNA(Leu) + L-leucine + ATP = L-leucyl-tRNA(Leu) + AMP + diphosphate. This is Leucine--tRNA ligase from Brucella anthropi (strain ATCC 49188 / DSM 6882 / CCUG 24695 / JCM 21032 / LMG 3331 / NBRC 15819 / NCTC 12168 / Alc 37) (Ochrobactrum anthropi).